The primary structure comprises 764 residues: Complement factor B (764 aa).

The N-terminal stretch at 1-25 (MGSNLSPQLCLMPFILGLLSGGVTT) is a signal peptide. Sushi domains lie at 35–100 (GSCS…ECRA), 101–160 (IHCP…ICDN), and 163–220 (GYCS…SCQD). Cystine bridges form between cysteine 37–cysteine 76, cysteine 62–cysteine 98, cysteine 103–cysteine 145, cysteine 131–cysteine 158, cysteine 165–cysteine 205, and cysteine 191–cysteine 218. 2 N-linked (GlcNAc...) asparagine glycosylation sites follow: asparagine 122 and asparagine 142. Residues 270–469 (NIYLVLDGSD…NLEDVFFQMI (200 aa)) enclose the VWFA domain. Residues serine 278 and serine 280 each contribute to the Mg(2+) site. Asparagine 285 is a glycosylation site (N-linked (GlcNAc...) asparagine). Residue threonine 353 coordinates Mg(2+). N-linked (GlcNAc...) asparagine glycosylation is present at asparagine 378. The 281-residue stretch at 477–757 (LCGMVWEHRK…VLPWLKQKLQ (281 aa)) folds into the Peptidase S1 domain. Cystine bridges form between cysteine 478–cysteine 596, cysteine 511–cysteine 527, cysteine 599–cysteine 615, cysteine 656–cysteine 682, and cysteine 695–cysteine 725. Active-site charge relay system residues include histidine 526 and aspartate 576. Serine 699 functions as the Charge relay system in the catalytic mechanism.

This sequence belongs to the peptidase S1 family. As to quaternary structure, monomer. Interacts with complement C3b; this interaction is dependent on the presence of Mg(2+). In terms of assembly, catalytic component of the C3 convertase of the alternative complement pathway, also named C3bBb, composed of complement factor B Bb and complement C3b. Catalytic component of the C5 convertase of the alternative complement pathway, also named C3bBb3b, composed of complement factor B Bb and additional molecules of complement C3b. Interacts to CFP; this interaction contributes to the stabilization of the active C3-convertase enzyme complex. Mg(2+) is required as a cofactor. The cofactor is Mn(2+). Cleaved by CFD following activation of the alternative complement system, generating Ba and Bb chains. Cleavage and activation takes place when CFB is already associated with complement C3b.

It is found in the secreted. It localises to the cell surface. The catalysed reaction is Cleavage of Arg-|-Ser bond in complement component C3 alpha-chain to yield C3a and C3b, and Arg-|-Xaa bond in complement component C5 alpha-chain to yield C5a and C5b.. Precursor of the catalytic component of the C3 and C5 convertase complexes of the alternative pathway of the complement system, a cascade of proteins that leads to phagocytosis and breakdown of pathogens and signaling that strengthens the adaptive immune system. The alternative complement pathway acts as an amplification loop that enhances other complement pathways (classical, lectin and GZMK) by promoting formation of additional C3 and C5 convertases. CFB is cleaved and activated by CFD to generate Ba and Bb chains; Bb chain constituting the catalytic component of the C3 and C5 convertases. In terms of biological role, serine protease component of the complement C3 and C5 convertase complexes of the alternative complement pathway. Following cleavage and activation by factor D (CFD), forms the C3 convertase together with complement C3b. As part of the C3 convertase, cleaves and activates C3 into C3a anaphylatoxin and C3b opsonin, the next components of the complement pathways. When an additional complement C3b molecule binds to the C3 convertase, forms the C5 convertase, which cleaves and activates C5 into C5a anaphylatoxin and C5b component of the membrane attack complex. Functionally, involved in proliferation and differentiation of preactivated B-lymphocytes, rapid spreading of peripheral blood monocytes, stimulation of lymphocyte blastogenesis and lysis of erythrocytes. The sequence is that of Complement factor B (CFB) from Pongo pygmaeus (Bornean orangutan).